Consider the following 235-residue polypeptide: CMP-N,N'-diacetyllegionaminic acid synthase (235 aa).

It belongs to the CMP-NeuNAc synthase family.

It carries out the reaction N,N-diacetyllegionaminate + CTP = CMP-N,N-diacetyllegionaminate + diphosphate. Functionally, involved in biosynthesis of legionaminic acid (5,7-diamino-3,5,7,9-tetradeoxy-D-glycero-D-galacto-non-2-ulosonic acid)(Leg), a sialic acid-like derivative that is incorporated into flagellin via O-linkage to Ser/Thr. Catalyzes the conversion of N,N'-diacetyllegionaminic acid (Leg5Ac7Ac) and CTP into CMP-N,N'-diacetyllegionaminic acid (CMP-Leg5Ac7Ac). The polypeptide is CMP-N,N'-diacetyllegionaminic acid synthase (legF) (Campylobacter jejuni subsp. jejuni serotype O:2 (strain ATCC 700819 / NCTC 11168)).